The sequence spans 622 residues: Putative E3 ubiquitin-protein ligase ORTHRUS 4 (622 aa).

Residues 12–62 form a PHD-type zinc finger; sequence DGVCMRCQVTPPSEETLTCGTCVTPWHVSCLLPESLASSTGDWECPDCSGV. The segment at 129 to 169 adopts an RING-type 1 zinc-finger fold; sequence CSICIQLPERPVTTPCGHNFCLKCFEKWAVGQGKLTCMICR. The 150-residue stretch at 258–407 folds into the YDG domain; sequence TRNQGVLVGE…HKMCRYLFVR (150 aa). The RING-type 2 zinc finger occupies 498–555; that stretch reads CQICRKVLSLPVTTPCAHNFCKACLEAKFAGITQLRDRSNGVRKLRAKKNIMTCPCCT. The stretch at 566–602 forms a coiled coil; it reads QVNREMMEIIENFKKSEEEAEVAESSNISEEEEEESE. The disordered stretch occupies residues 579-622; that stretch reads KKSEEEAEVAESSNISEEEEEESEPPTKKIKMDNNSVGDTSLSA. Residues 611-622 show a composition bias toward polar residues; that stretch reads DNNSVGDTSLSA.

The protein resides in the nucleus. It catalyses the reaction S-ubiquitinyl-[E2 ubiquitin-conjugating enzyme]-L-cysteine + [acceptor protein]-L-lysine = [E2 ubiquitin-conjugating enzyme]-L-cysteine + N(6)-ubiquitinyl-[acceptor protein]-L-lysine.. Its pathway is protein modification; protein ubiquitination. Functionally, E3 ubiquitin-protein ligase. May participate in CpG methylation-dependent transcriptional regulation. This is Putative E3 ubiquitin-protein ligase ORTHRUS 4 (ORTH4) from Arabidopsis thaliana (Mouse-ear cress).